Here is an 85-residue protein sequence, read N- to C-terminus: MAADHYVYVLSCADETLYTGYTTNVERRVAEHDAGEGAKYTRGRTPVELVHTERFDSKSAAMQREHEIKSLSRAKKERLVADETG.

Residues 3–78 (ADHYVYVLSC…KSLSRAKKER (76 aa)) form the GIY-YIG domain. A compositionally biased stretch (basic and acidic residues) spans 58–70 (KSAAMQREHEIKS). Positions 58–85 (KSAAMQREHEIKSLSRAKKERLVADETG) are disordered.

This sequence belongs to the UPF0213 family.

The chain is UPF0213 protein NP_0776A from Natronomonas pharaonis (strain ATCC 35678 / DSM 2160 / CIP 103997 / JCM 8858 / NBRC 14720 / NCIMB 2260 / Gabara) (Halobacterium pharaonis).